Reading from the N-terminus, the 484-residue chain is Antibiotic efflux pump outer membrane protein ArpC (484 aa).

An N-terminal signal peptide occupies residues 1 to 17; sequence MTKSLLSLAVTAFILGG. C18 carries the N-palmitoyl cysteine lipid modification. A lipid anchor (S-diacylglycerol cysteine) is attached at C18.

It belongs to the outer membrane factor (OMF) (TC 1.B.17) family.

The protein localises to the cell outer membrane. In terms of biological role, the outer membrane component of an antibiotic efflux pump. Confers resistance to numerous structurally unrelated antibiotics such as carbenicillin, chloramphenicol, erythromycin, novobiocin, streptomycin and tetracycline. Is not involved in organic solvent efflux. In Pseudomonas putida (Arthrobacter siderocapsulatus), this protein is Antibiotic efflux pump outer membrane protein ArpC (arpC).